The following is a 125-amino-acid chain: Nascent polypeptide-associated complex protein (125 aa).

The NAC-A/B domain maps to 9-76 (PRMMKQMQKM…SKNTSKTAEK (68 aa)).

Belongs to the NAC-alpha family. As to quaternary structure, homodimer. Interacts with the ribosome. Binds ribosomal RNA.

Contacts the emerging nascent chain on the ribosome. In Methanococcus vannielii (strain ATCC 35089 / DSM 1224 / JCM 13029 / OCM 148 / SB), this protein is Nascent polypeptide-associated complex protein.